The chain runs to 186 residues: GTP-dependent dephospho-CoA kinase (186 aa).

GTP contacts are provided by Asp43, Ile44, Val45, Asp62, Glu120, and Asp143.

The protein belongs to the GTP-dependent DPCK family.

The enzyme catalyses 3'-dephospho-CoA + GTP = GDP + CoA + H(+). Its pathway is cofactor biosynthesis; coenzyme A biosynthesis. Functionally, catalyzes the GTP-dependent phosphorylation of the 3'-hydroxyl group of dephosphocoenzyme A to form coenzyme A (CoA). In Haloquadratum walsbyi (strain DSM 16790 / HBSQ001), this protein is GTP-dependent dephospho-CoA kinase.